Here is a 156-residue protein sequence, read N- to C-terminus: Cytochrome c-type biogenesis protein CcmE 1 (156 aa).

The Cytoplasmic portion of the chain corresponds to 1–8 (MNATRKQR). The helical; Signal-anchor for type II membrane protein transmembrane segment at 9-29 (LCLVIGVLAAAALAVTLIVFA) threads the bilayer. Residues 30-156 (LQRNMSYLFT…ATAAPLTTPR (127 aa)) are Periplasmic-facing. Heme-binding residues include H123 and Y127.

It belongs to the CcmE/CycJ family.

The protein resides in the cell inner membrane. In terms of biological role, heme chaperone required for the biogenesis of c-type cytochromes. Transiently binds heme delivered by CcmC and transfers the heme to apo-cytochromes in a process facilitated by CcmF and CcmH. The protein is Cytochrome c-type biogenesis protein CcmE 1 of Xanthomonas oryzae pv. oryzae (strain MAFF 311018).